Consider the following 328-residue polypeptide: NAD(P)H-dependent pentose reductase (328 aa).

Tyr50 serves as the catalytic Proton donor. His112 provides a ligand contact to substrate. Residues 174-175, 223-232, and 279-289 contribute to the NAD(+) site; these read AN, SSFGPQSFVE, and KSNNVDRLKQN.

This sequence belongs to the aldo/keto reductase family.

Pentose reductase with a broad substrate affinity involved in pentose catabolism. Has highest reductase activities with L-arabinose and D-xylose as substrates, and displays much lower activities with D-ribose, D-galactose and D-glucose. Has highest dehydrogenase activity with L-arabitol as substrate, followed by xylitol and D-sorbitol. May be responsible for the first step of the L-arabinose catabolic pathway. This is NAD(P)H-dependent pentose reductase (PRD1) from Pyricularia oryzae (strain 70-15 / ATCC MYA-4617 / FGSC 8958) (Rice blast fungus).